Reading from the N-terminus, the 348-residue chain is tRNA N6-adenosine threonylcarbamoyltransferase (348 aa).

Positions 118 and 122 each coordinate Fe cation. Substrate is bound by residues 140–144 (LVSGG), aspartate 173, glycine 186, aspartate 190, and asparagine 279. Aspartate 309 contributes to the Fe cation binding site.

Belongs to the KAE1 / TsaD family. Fe(2+) serves as cofactor.

The protein localises to the cytoplasm. The enzyme catalyses L-threonylcarbamoyladenylate + adenosine(37) in tRNA = N(6)-L-threonylcarbamoyladenosine(37) in tRNA + AMP + H(+). Functionally, required for the formation of a threonylcarbamoyl group on adenosine at position 37 (t(6)A37) in tRNAs that read codons beginning with adenine. Is involved in the transfer of the threonylcarbamoyl moiety of threonylcarbamoyl-AMP (TC-AMP) to the N6 group of A37, together with TsaE and TsaB. TsaD likely plays a direct catalytic role in this reaction. This chain is tRNA N6-adenosine threonylcarbamoyltransferase, found in Lactiplantibacillus plantarum (strain ATCC BAA-793 / NCIMB 8826 / WCFS1) (Lactobacillus plantarum).